The chain runs to 256 residues: NAP1-related protein 1 (256 aa).

A coiled-coil region spans residues 23-64; sequence IDAELVLSIEKLQEIQDDLEKINEKASDEVLEVEQKYNVIRK. A disordered region spans residues 220 to 256; it reads LTYFNNDADEEDFDGDDDGDEEGEEDDDDEEEEDGEE. The span at 226-256 shows a compositional bias: acidic residues; it reads DADEEDFDGDDDGDEEGEEDDDDEEEEDGEE.

The protein belongs to the nucleosome assembly protein (NAP) family. Can form homomeric and heteromeric protein complexes with NRP2. Binds histones H2A and H2B and associates with chromatin in vivo. As to expression, ubiquitous.

It localises to the cytoplasm. The protein localises to the nucleus. Acts as a histone H2A/H2B chaperone in nucleosome assembly, playing a critical role for the correct expression of genes involved in root proliferation and patterning. Required with NRP2 for the maintenance of cell proliferation and differentiation in postembryonic root growth. Involved in both intramolecular and intermolecular somatic homologous recombination. The sequence is that of NAP1-related protein 1 (NRP1) from Arabidopsis thaliana (Mouse-ear cress).